The primary structure comprises 129 residues: KVYGRCELAAAMKRLGLDNYRGYSLGNWVCAAKFESNFNTHATNRNTDGSTDYGILQINSRWWCNDGRTPGSRNLCHIPCSALLSSDITASVNCAKKIVSDGNGMNAWVAWRNRCKGTDVNAWTRGCRL.

A C-type lysozyme domain is found at lysine 1–leucine 129. Cystine bridges form between cysteine 6-cysteine 127, cysteine 30-cysteine 115, cysteine 64-cysteine 80, and cysteine 76-cysteine 94. Residues glutamate 35 and aspartate 52 contribute to the active site.

This sequence belongs to the glycosyl hydrolase 22 family. As to quaternary structure, monomer.

It localises to the secreted. The catalysed reaction is Hydrolysis of (1-&gt;4)-beta-linkages between N-acetylmuramic acid and N-acetyl-D-glucosamine residues in a peptidoglycan and between N-acetyl-D-glucosamine residues in chitodextrins.. In terms of biological role, lysozymes have primarily a bacteriolytic function; those in tissues and body fluids are associated with the monocyte-macrophage system and enhance the activity of immunoagents. This chain is Lysozyme C (LYZ), found in Chrysolophus amherstiae (Lady Amherst's pheasant).